Reading from the N-terminus, the 965-residue chain is GGISVPGPMGPSGPRGLPGPPGPGPQGFQGPPGEPGEPGSSGPMGPRGPPGPPGKNGDDGEAGKPGRPGERGPPGPQGARGLPGTAGLPGMKGHRGFSGLDGAKGDAGPAGPKGEPGSPGENGAPGQMGPRGPGERGRPGASGPAGARGNDGATGAAGPPGPTGPAGPPGFPGAVGAKGEAGPQGARGSEGPQGVRGEPGPPGPAGAAGPAGNPGADGQPGAKGANGAPGIAGAPGFPGARGPSGPQGPSGPPGPKGNSGEPGAPGGEPGPTGIQGPPGPAGEEGKRGARGEPGPTGLPGPPGERGGPGSRGFPGADGVAGPKGSPGEAGRPGEAGLPGAKGLTGSPGSPGPDGKTGPPGPAGQDGRPGPPGPPGARGQAGVMGFPGPKGAAGEPGKAGERGVPGPPGAVGPAGKDGEAGAQGPPGPAGPAGERGEQGPAGPGFQGLPGPAGPPGEAGKPGEQGVPGDLGAPGPSGARGERGFPGERGVQGPPGPAGPRGSSQGAPGLQGMPGERGAAGLPGPKGDRGDAGPKGADGAPGKDGVRGLTGPIGPPGPAGAPGDKGESGPSGPAGPTGARGAPGDRGEPGPPGPAGFAGPPGADGQPGAKGEPGDAGAKGDAGPPGPAGPTGAPGPIGNLGAPGPKGARGSAGPPGATGFPGAAGRVGPPGPSGNAGPPGPPGPVGKEGGKGPRGETGPAGEVGPPGPPGPSGEKGSPGADGPAGAPGTPGPQGISGQRGVVGLPGQRGERGFPGLPGPSGEPGKQGPSGSSGERGPPGPMGPPGLAGPPGESGREGPGAEGSPGRDGSPGPKGDRGEGPPGAPGAPGAPGPVGPAGKSGDRGETGPGPAGPAGPAGARGPAGPQGPRGDKGETGEQGDRGIKGHRGFSGLQGPAGPPGSPGEQGPSGASGPAGPRGPPGSAGSPGKDGLNGLPGPIGPPGPRGRTGDAGPVGPPGPPGPPGPPGPP.

The interval 1 to 965 (GGISVPGPMG…PGPPGPPGPP (965 aa)) is disordered. 4-hydroxyproline is present on residues proline 18, proline 21, proline 23, proline 32, proline 35, proline 38, proline 53, proline 68, proline 74, proline 83, and proline 89. Low complexity predominate over residues 26–44 (QGFQGPPGEPGEPGSSGPM). Residues 56 to 70 (NGDDGEAGKPGRPGE) are compositionally biased toward basic and acidic residues. At lysine 92 the chain carries 5-hydroxylysine; alternate. O-linked (Gal...) hydroxylysine; alternate glycosylation is present at lysine 92. Serine 98 is modified (phosphoserine). Over residues 106 to 122 (DAGPAGPKGEPGSPGEN) the composition is skewed to low complexity. Proline 116, proline 119, proline 125, proline 139, proline 160, proline 169, proline 172, proline 199, proline 202, proline 214, proline 220, proline 229, proline 235, proline 238, and proline 253 each carry 4-hydroxyproline. The segment covering 139–157 (PGASGPAGARGNDGATGAA) has biased composition (low complexity). Residues 159–171 (PPGPTGPAGPPGF) show a composition bias toward pro residues. Residues 205–244 (AGAAGPAGNPGADGQPGAKGANGAPGIAGAPGFPGARGPS) show a composition bias toward low complexity. Position 256 is a 5-hydroxylysine (lysine 256). Residues proline 262, proline 265, proline 269, proline 278, proline 293, proline 299, proline 308, and proline 314 each carry the 4-hydroxyproline modification. Positions 303-312 (GERGGPGSRG) are enriched in gly residues. Lysine 323 carries the post-translational modification 5-hydroxylysine. Proline 326, proline 332, proline 338, proline 347, proline 350, proline 359, proline 368, proline 374, proline 386, proline 395, proline 404, proline 407, proline 425, proline 442, proline 448, proline 454, proline 460, proline 466, proline 472, proline 484, proline 493, proline 506, proline 512, and proline 521 each carry 4-hydroxyproline. Positions 341 to 367 (KGLTGSPGSPGPDGKTGPPGPAGQDGR) are enriched in low complexity. Positions 376–395 (ARGQAGVMGFPGPKGAAGEP) are enriched in low complexity. Residues 454–463 (PGEAGKPGEQ) are compositionally biased toward low complexity. Lysine 533 is subject to 5-hydroxylysine. Proline 539, proline 554, and proline 560 each carry 4-hydroxyproline. A compositionally biased stretch (low complexity) spans 566 to 580 (SGPSGPAGPTGARGA). At serine 569 the chain carries Phosphoserine. 4-hydroxyproline occurs at positions 581, 587, 590, 599, 605, 623, 632, and 641. The segment covering 593 to 620 (AGFAGPPGADGQPGAKGEPGDAGAKGDA) has biased composition (low complexity). Lysine 644 bears the 5-hydroxylysine mark. Over residues 649–665 (SAGPPGATGFPGAAGRV) the composition is skewed to low complexity. A 4-hydroxyproline mark is found at proline 653 and proline 659. 3-hydroxyproline is present on proline 667. 14 positions are modified to 4-hydroxyproline: proline 668, proline 677, proline 680, proline 716, proline 725, proline 743, proline 752, proline 755, proline 761, proline 776, proline 782, proline 788, proline 796, and proline 802. Over residues 710 to 725 (SGEKGSPGADGPAGAP) the composition is skewed to low complexity. Over residues 775–785 (PPGPMGPPGLA) the composition is skewed to pro residues. Lysine 811 is modified (5-hydroxylysine). Proline 819, proline 822, and proline 825 each carry 4-hydroxyproline. The segment covering 819–831 (PGAPGAPGAPGPV) has biased composition (pro residues). Over residues 851 to 865 (AGPAGARGPAGPQGP) the composition is skewed to low complexity. Positions 866–880 (RGDKGETGEQGDRGI) are enriched in basic and acidic residues. Lysine 869 carries the 5-hydroxylysine modification. Residue lysine 881 is modified to 5-hydroxylysine; alternate. An O-linked (Gal...) hydroxylysine; alternate glycan is attached at lysine 881. A 4-hydroxyproline mark is found at proline 896, proline 899, proline 917, and proline 932. Positions 899–932 (PGEQGPSGASGPAGPRGPPGSAGSPGKDGLNGLP) are enriched in low complexity. Proline 937 bears the 3-hydroxyproline mark. The residue at position 938 (proline 938) is a 4-hydroxyproline. Over residues 950-965 (VGPPGPPGPPGPPGPP) the composition is skewed to pro residues. Residue proline 952 is modified to 3-hydroxyproline. 4-hydroxyproline is present on proline 953. Proline 955 is modified (3-hydroxyproline). Proline 956 carries the post-translational modification 4-hydroxyproline. A 3-hydroxyproline modification is found at proline 958. Proline 959, proline 962, and proline 965 each carry 4-hydroxyproline.

This sequence belongs to the fibrillar collagen family. Trimers of one alpha 2(I) and two alpha 1(I) chains. In terms of processing, contains mostly 4-hydroxyproline. Proline residues at the third position of the tripeptide repeating unit (G-X-Y) are hydroxylated in some or all of the chains. Post-translationally, contains 3-hydroxyproline at a few sites. This modification occurs on the first proline residue in the sequence motif Gly-Pro-Hyp, where Hyp is 4-hydroxyproline. Lysine residues at the third position of the tripeptide repeating unit (G-X-Y) are 5-hydroxylated in some or all of the chains. In terms of processing, O-glycosylated on hydroxylated lysine residues. The O-linked glycan consists of a Glc-Gal disaccharide. In terms of tissue distribution, expressed in bones.

The protein localises to the secreted. Its subcellular location is the extracellular space. It is found in the extracellular matrix. Its function is as follows. Type I collagen is a member of group I collagen (fibrillar forming collagen). The protein is Collagen alpha-1(I) chain of Acratocnus sp. (strain SLP-2019) (Ground sloth).